A 338-amino-acid polypeptide reads, in one-letter code: L-lysine 2,3-aminomutase (338 aa).

The region spanning histidine 107–glutamate 330 is the Radical SAM core domain. Residues cysteine 121, cysteine 125, and cysteine 128 each coordinate [4Fe-4S] cluster. Lysine 333 bears the N6-(pyridoxal phosphate)lysine mark.

This sequence belongs to the radical SAM superfamily. KamA family. Requires [4Fe-4S] cluster as cofactor. Pyridoxal 5'-phosphate is required as a cofactor.

It carries out the reaction L-lysine = D-beta-lysine. Functionally, with EpmA is involved in the beta-lysylation step of the post-translational modification of translation elongation factor P (EF-P) on 'Lys-34'. EpmB appears to act before EpmA. Displays lysine 2,3-aminomutase activity, producing (R)-beta-lysine from (S)-alpha-lysine (L-lysine). This is L-lysine 2,3-aminomutase (epmB) from Haemophilus influenzae (strain ATCC 51907 / DSM 11121 / KW20 / Rd).